The following is a 148-amino-acid chain: D-aminoacyl-tRNA deacylase (148 aa).

The Gly-cisPro motif, important for rejection of L-amino acids motif lies at Gly-137–Pro-138.

The protein belongs to the DTD family. As to quaternary structure, homodimer.

It localises to the cytoplasm. It catalyses the reaction glycyl-tRNA(Ala) + H2O = tRNA(Ala) + glycine + H(+). It carries out the reaction a D-aminoacyl-tRNA + H2O = a tRNA + a D-alpha-amino acid + H(+). Its function is as follows. An aminoacyl-tRNA editing enzyme that deacylates mischarged D-aminoacyl-tRNAs. Also deacylates mischarged glycyl-tRNA(Ala), protecting cells against glycine mischarging by AlaRS. Acts via tRNA-based rather than protein-based catalysis; rejects L-amino acids rather than detecting D-amino acids in the active site. By recycling D-aminoacyl-tRNA to D-amino acids and free tRNA molecules, this enzyme counteracts the toxicity associated with the formation of D-aminoacyl-tRNA entities in vivo and helps enforce protein L-homochirality. The polypeptide is D-aminoacyl-tRNA deacylase (Oenococcus oeni (strain ATCC BAA-331 / PSU-1)).